Consider the following 543-residue polypeptide: Neurofilament light polypeptide (543 aa).

An N-acetylserine modification is found at S2. A head region spans residues 2 to 92 (SSFSYEPYYS…LKSIRTQEKA (91 aa)). An O-linked (GlcNAc) threonine glycan is attached at T21. R23 is modified (asymmetric dimethylarginine; alternate). An Omega-N-methylarginine; alternate modification is found at R23. S27 carries O-linked (GlcNAc) serine glycosylation. R30 is modified (omega-N-methylarginine). Residue Y43 is modified to Phosphotyrosine. Residues S56, S67, and S103 each carry the phosphoserine modification. The IF rod domain maps to 90–400 (EKAQLQDLND…KLLEGEETRL (311 aa)). Positions 93–124 (QLQDLNDRFASFIERVHELEQQNKVLEAELLV) are coil 1A. The interval 125–137 (LRQKHSEPSRFRA) is linker 1. The coil 1B stretch occupies residues 138–234 (LYEQEIRDLR…KVHEEEIAEL (97 aa)). A linker 12 region spans residues 235-252 (QAQIQYAQISVEMDVTKP). Positions 253–271 (DLSAALKDIRAQYEKLAAK) are coil 2A. A linker 2 region spans residues 272 to 280 (NMQNAEEWF). The segment at 281-396 (KSRFTVLTES…AAYRKLLEGE (116 aa)) is coil 2B. The epitope; recognized by IF-specific monoclonal antibody stretch occupies residues 381 to 391 (ALDIEIAAYRK). The tail, subdomain A stretch occupies residues 397–443 (ETRLSFTSVGSITSGYSQSSQVFGRSAYGGLQTSSYLMSTRSFPSYY). The interval 397 to 543 (ETRLSFTSVG…GEEQAAKKKD (147 aa)) is tail. A tail, subdomain B (acidic) region spans residues 444-543 (TSHVQEEQIE…GEEQAAKKKD (100 aa)). The tract at residues 462-543 (KAEEAKDEPP…GEEQAAKKKD (82 aa)) is disordered. The segment covering 471–525 (PSEGEAEEEEKDKEEAEEEEAAEEEEAAKEESEEAKEEEEGGEGEEGEETKEAEE) has biased composition (acidic residues). 2 positions are modified to phosphoserine: S472 and S502. Position 520 is a phosphothreonine (T520). Basic and acidic residues predominate over residues 526–543 (EEKKVEGAGEEQAAKKKD).

It belongs to the intermediate filament family. As to quaternary structure, forms homodimers (in vitro). Forms heterodimers with NEFH or NEFM; which can further hetero-oligomerize (in vitro). Forms heterodimers with INA (in vitro). Interacts with ARHGEF28. Interacts with TRIM2. O-glycosylated. Post-translationally, phosphorylated in the head and rod regions by the PKC kinase PKN1, leading to the inhibition of polymerization. In terms of processing, ubiquitinated in the presence of TRIM2 and UBE2D1.

It is found in the cell projection. It localises to the axon. The protein resides in the cytoplasm. The protein localises to the cytoskeleton. Its function is as follows. Neurofilaments usually contain three intermediate filament proteins: NEFL, NEFM, and NEFH which are involved in the maintenance of neuronal caliber. May additionally cooperate with the neuronal intermediate filament proteins PRPH and INA to form neuronal filamentous networks. This chain is Neurofilament light polypeptide (NEFL), found in Homo sapiens (Human).